The sequence spans 123 residues: Small ribosomal subunit protein uS12 (123 aa).

Asp-90 bears the 3-methylthioaspartic acid mark.

Belongs to the universal ribosomal protein uS12 family. Part of the 30S ribosomal subunit. Contacts proteins S8 and S17. May interact with IF1 in the 30S initiation complex.

In terms of biological role, with S4 and S5 plays an important role in translational accuracy. Its function is as follows. Interacts with and stabilizes bases of the 16S rRNA that are involved in tRNA selection in the A site and with the mRNA backbone. Located at the interface of the 30S and 50S subunits, it traverses the body of the 30S subunit contacting proteins on the other side and probably holding the rRNA structure together. The combined cluster of proteins S8, S12 and S17 appears to hold together the shoulder and platform of the 30S subunit. The polypeptide is Small ribosomal subunit protein uS12 (Ehrlichia ruminantium (strain Gardel)).